The sequence spans 248 residues: uncharacterized protein (248 aa).

Belongs to the glycosyltransferase 2 family.

This is an uncharacterized protein from Acanthamoeba polyphaga (Amoeba).